The sequence spans 691 residues: Zinc finger protein 770 (691 aa).

A Glycyl lysine isopeptide (Lys-Gly) (interchain with G-Cter in SUMO2) cross-link involves residue lysine 11. C2H2-type zinc fingers lie at residues 27–49 (YVCN…YLIH), 55–77 (FECD…QLTH), and 81–103 (FKCS…QQLH). Glycyl lysine isopeptide (Lys-Gly) (interchain with G-Cter in SUMO2) cross-links involve residues lysine 112, lysine 121, and lysine 146. 3 C2H2-type zinc fingers span residues 160–182 (HACT…VLIH), 188–210 (FKCV…QLTH), and 216–238 (FQCC…KQIH). Positions 258-277 (PLPNKLNANQGGFENGEIGE) are disordered. Residue lysine 262 forms a Glycyl lysine isopeptide (Lys-Gly) (interchain with G-Cter in SUMO2) linkage. The C2H2-type 7; degenerate zinc-finger motif lies at 294-318 (FQCPKCEKCFESEQILNEHSCFAAR). Residues lysine 420 and lysine 437 each participate in a glycyl lysine isopeptide (Lys-Gly) (interchain with G-Cter in SUMO2) cross-link. C2H2-type zinc fingers lie at residues 475–497 (CPCD…YLIH), 503–525 (FGCN…EQTH), 625–647 (YRCS…YLIH), and 653–675 (FECS…QLTH). Lysine 683 participates in a covalent cross-link: Glycyl lysine isopeptide (Lys-Gly) (interchain with G-Cter in SUMO2).

This sequence belongs to the krueppel C2H2-type zinc-finger protein family.

The protein resides in the nucleus. May be involved in transcriptional regulation. The sequence is that of Zinc finger protein 770 (ZNF770) from Homo sapiens (Human).